Consider the following 170-residue polypeptide: Ribosome-binding factor A (170 aa).

The disordered stretch occupies residues A123–H170. Residues E143 to D158 are compositionally biased toward acidic residues.

This sequence belongs to the RbfA family. In terms of assembly, monomer. Binds 30S ribosomal subunits, but not 50S ribosomal subunits or 70S ribosomes.

The protein resides in the cytoplasm. One of several proteins that assist in the late maturation steps of the functional core of the 30S ribosomal subunit. Associates with free 30S ribosomal subunits (but not with 30S subunits that are part of 70S ribosomes or polysomes). Required for efficient processing of 16S rRNA. May interact with the 5'-terminal helix region of 16S rRNA. The sequence is that of Ribosome-binding factor A from Clavibacter sepedonicus (Clavibacter michiganensis subsp. sepedonicus).